A 49-amino-acid polypeptide reads, in one-letter code: SALYALYDFSPPARKMRAYTVRAYVHGSYSRRGPWYDFEPVPGASMDGL.

It belongs to the pancreatic ribonuclease family. Glycosylated. Milk.

It localises to the secreted. Manifests poly C-specific RNase activity toward yeast tRNA, elicits a dose-dependent inhibition of cell-free translation, inhibits formation of superoxide ions in vitro and inhibits the hemagglutinating activities of soybean lectin and Ricinus communis agglutinin 120. Inhibits HIV-1 reverse transcriptase. This Bos taurus (Bovine) protein is Glycolactin.